The chain runs to 296 residues: UPF0761 membrane protein YE0031 (296 aa).

7 consecutive transmembrane segments (helical) span residues Leu-44–Phe-64, Ile-67–Ile-87, Gly-108–Trp-128, Leu-136–Ala-156, Leu-185–Val-205, Ala-212–Met-232, and Val-246–Leu-266.

This sequence belongs to the UPF0761 family.

It is found in the cell inner membrane. The polypeptide is UPF0761 membrane protein YE0031 (Yersinia enterocolitica serotype O:8 / biotype 1B (strain NCTC 13174 / 8081)).